We begin with the raw amino-acid sequence, 604 residues long: MTDVPVSRLRNFCIIAHIDHGKSTLADRLLQDTGTVAGRDMQEQFLDNMDLERERGITIKLQAARMNYTAADGESYVLNLIDTPGHVDFSYEVSRSLQACEGALLVVDASQGVEAQTLANVYLALENDLEIIPVLNKIDLPGSDPERIKEEIEAIIGLDTSTAIACSAKTGLGVSEIMQAVVDRIPPPADTLDEPTRALIFDSYYDSYRGVIVYFRVISGRISTKDKVLLMASKKSYELDEIGVMSPDQCEVNELHAGEVGYLAASIKAVADARVGDTITLLNAPADEPLPGYTEAKPMVFCGLFPTDADQYPDLREALDKLQLSDAALKYEPETSSAMGFGFRCGFLGLLHMEIVQERLEREYDLDLIVTAPSVIYKVNMIDGQMLMVDNPATLPDPQKRESIEEPYVRMEIYAPNEYNGTLMGLCQERRGEYIDMKYLTTERVTLIYELPLAEVVTDFFDQMKSRTKGYASMEYHLIGYRRNDLVRLDVLINAEKADPLTTIAHRDKAYSIGKGLVEKLKELIPRQQFKIPLQASIGSRIIASESISAMRKDVLAKCYGGDISRKKKLLKKQAKGKKRMKAMGKVDVPQEAFMAVLKLNQTS.

Positions 7–189 constitute a tr-type G domain; sequence SRLRNFCIIA…AVVDRIPPPA (183 aa). Residues 19–24 and 136–139 each bind GTP; these read DHGKST and NKID.

Belongs to the TRAFAC class translation factor GTPase superfamily. Classic translation factor GTPase family. LepA subfamily.

The protein resides in the cell inner membrane. The enzyme catalyses GTP + H2O = GDP + phosphate + H(+). In terms of biological role, required for accurate and efficient protein synthesis under certain stress conditions. May act as a fidelity factor of the translation reaction, by catalyzing a one-codon backward translocation of tRNAs on improperly translocated ribosomes. Back-translocation proceeds from a post-translocation (POST) complex to a pre-translocation (PRE) complex, thus giving elongation factor G a second chance to translocate the tRNAs correctly. Binds to ribosomes in a GTP-dependent manner. In Prochlorococcus marinus (strain MIT 9303), this protein is Elongation factor 4.